Reading from the N-terminus, the 488-residue chain is MSYPGYPPTGYPPFPGYPPAGQESSFPPSGQYPYPSGFPPMGGGAYPQVPSSGYPGAGGYPAPGGYPAPGGYPGAPQPGGAPSYPGVPPGQGFGVPPGGAGFSGYPQPPSQSYGGGPAQVPLPGGFPGGQMPSQYPGGQPTYPSQINTESFPSYPVFSPVSLDYSSEPAAMTQGTQGTIRPAANFDAMRDAEILRKAMKGFGTDEQAIVDVVANRSNDQRQKIKAAFKTSYGKDLIKDLKSELSGNMEELILALFMPPTYYDAWTLRKAMQGAGTQERVLIEILCTRTNQEIREIVRCYQSEFGRDLEKDIRSDTSGHFERLLVSMCQGNRDENQSVNHQMAQEDAQRLYQAGEGRLGTDESCFNMILATRSFPQLRATMEAYSRMANRDLLSSVSREFSGYVESGLKTILQCALNRPAFFAERLYYAMKGAGTDDSTLVRIVVTRSEIDLVQIKQMFAQMYQKTLGTMIAGDTSGDYRRPLLAIVGQ.

Residues 1–18 show a composition bias toward pro residues; sequence MSYPGYPPTGYPPFPGYP. Disordered regions lie at residues 1-49 and 71-150; these read MSYP…YPQV and GYPG…NTES. Residues 1–143 form a repeat-rich region region; that stretch reads MSYPGYPPTG…QYPGGQPTYP (143 aa). Residues 5-20 are 3 X 5 AA tandem repeats of G-Y-P-P-X; sequence GYPPTGYPPFPGYPPA. Gly residues predominate over residues 89-102; it reads PGQGFGVPPGGAGF. Annexin repeat units follow at residues 185–256, 257–328, 340–412, and 416–487; these read FDAM…ALFM, PPTY…SMCQ, QMAQ…TILQ, and NRPA…AIVG. N6-acetyllysine is present on lysine 233.

This sequence belongs to the annexin family. In terms of assembly, interacts with PDCD6.

In terms of biological role, calcium/phospholipid-binding protein which promotes membrane fusion and is involved in exocytosis. The polypeptide is Annexin A7 (ANXA7) (Macaca fascicularis (Crab-eating macaque)).